We begin with the raw amino-acid sequence, 698 residues long: Glycine--tRNA ligase beta subunit (698 aa).

The protein belongs to the class-II aminoacyl-tRNA synthetase family. Tetramer of two alpha and two beta subunits.

Its subcellular location is the cytoplasm. It carries out the reaction tRNA(Gly) + glycine + ATP = glycyl-tRNA(Gly) + AMP + diphosphate. This chain is Glycine--tRNA ligase beta subunit, found in Xanthomonas campestris pv. campestris (strain 8004).